Consider the following 283-residue polypeptide: Para-Rep C7 (283 aa).

One can recognise a CRESS-DNA virus Rep endonuclease domain in the interval 3–96 (SIRATHWCFT…IAGPWEYGTW (94 aa)). The short motif at 10 to 13 (CFTL) is the RCR-1 element. A divalent metal cation is bound by residues E36 and H42. Residues 42 to 44 (HLQ) carry the RCR-2 motif. Positions 51 to 71 (KHVTLKKMKELLPGAHLEMAK) match the Nuclear localization signal motif. Y79 functions as the For DNA cleavage activity in the catalytic mechanism. Residues 79–82 (YCQK) carry the RCR-3 motif. Residue E84 participates in a divalent metal cation binding. Positions 96–102 (WISSGSH) match the Nuclear localization signal motif. 178 to 180 (GKS) contributes to the ATP binding site.

This sequence belongs to the nanoviridea/circoviridae replication-associated protein family. In terms of assembly, homooligomer (Potential). Rep binds to repeated DNA motifs (iterons). Mg(2+) is required as a cofactor. Mn(2+) serves as cofactor.

Its subcellular location is the host nucleus. It carries out the reaction ATP + H2O = ADP + phosphate + H(+). In terms of biological role, initiates and terminates the replication only of its own subviral DNA molecule. The closed circular ssDNA genome is first converted to a superhelical dsDNA. Rep binds a specific hairpin at the genome origin of replication. Introduces an endonucleolytic nick within the intergenic region of the genome, thereby initiating the rolling circle replication (RCR). Following cleavage, binds covalently to the 5'-phosphate of DNA as a tyrosyl ester. The cleavage gives rise to a free 3'-OH that serves as a primer for the cellular DNA polymerase. The polymerase synthesizes the (+) strand DNA by rolling circle mechanism. After one round of replication, a Rep-catalyzed nucleotidyl transfer reaction releases a circular single-stranded virus genome, thereby terminating the replication. Displays origin-specific DNA cleavage, nucleotidyl transferase, ATPase and helicase activities. The polypeptide is Para-Rep C7 (C7) (Faba bean necrotic yellows C7 alphasatellite (FBNYC7A)).